A 91-amino-acid polypeptide reads, in one-letter code: Small ribosomal subunit protein uS19 (91 aa).

The protein belongs to the universal ribosomal protein uS19 family.

In terms of biological role, protein S19 forms a complex with S13 that binds strongly to the 16S ribosomal RNA. In Bordetella pertussis (strain Tohama I / ATCC BAA-589 / NCTC 13251), this protein is Small ribosomal subunit protein uS19.